Reading from the N-terminus, the 320-residue chain is Malate dehydrogenase (320 aa).

NAD(+)-binding positions include 8–13 (GAGQIG) and aspartate 33. Substrate contacts are provided by arginine 82 and arginine 88. NAD(+) contacts are provided by residues asparagine 95 and 118 to 120 (ITN). Substrate contacts are provided by asparagine 120 and arginine 151. Catalysis depends on histidine 175, which acts as the Proton acceptor.

Belongs to the LDH/MDH superfamily. MDH type 3 family.

It carries out the reaction (S)-malate + NAD(+) = oxaloacetate + NADH + H(+). Catalyzes the reversible oxidation of malate to oxaloacetate. In Pelagibacter ubique (strain HTCC1062), this protein is Malate dehydrogenase.